The sequence spans 681 residues: CAI-1 autoinducer sensor kinase/phosphatase CqsS (681 aa).

A run of 4 helical transmembrane segments spans residues 17-37 (LVGW…EFMF), 73-93 (AYYQ…MLLM), 112-132 (ILLV…IGLA), and 148-168 (MDWT…LFYF). One can recognise a Histidine kinase domain in the interval 187 to 413 (GIAHEMRNPL…QFTMTFPTIG (227 aa)). Histidine 190 bears the Phosphohistidine; by autocatalysis mark. In terms of domain architecture, Response regulatory spans 564-681 (TIMVVDDNES…RLFDKIANWI (118 aa)). At aspartate 613 the chain carries 4-aspartylphosphate.

The protein resides in the cell membrane. It carries out the reaction ATP + protein L-histidine = ADP + protein N-phospho-L-histidine.. Functionally, senses the quorum-sensing autoinducer CAI-1 ((S)-3-hydroxytridecan-4-one) which probably functions as an intragenus signal. The sensory signal is then relayed to LuxU and LuxO. This is CAI-1 autoinducer sensor kinase/phosphatase CqsS (cqsS) from Vibrio campbellii (strain ATCC BAA-1116).